A 41-amino-acid polypeptide reads, in one-letter code: Large ribosomal subunit protein bL36 (41 aa).

It belongs to the bacterial ribosomal protein bL36 family.

This chain is Large ribosomal subunit protein bL36, found in Vibrio vulnificus (strain YJ016).